Here is a 98-residue protein sequence, read N- to C-terminus: NADH-ubiquinone oxidoreductase chain 4L (98 aa).

3 helical membrane passes run 2–22 (PSIS…MLIF), 29–49 (SLLC…LTIL), and 61–81 (ILLL…LVTV).

It belongs to the complex I subunit 4L family. As to quaternary structure, core subunit of respiratory chain NADH dehydrogenase (Complex I) which is composed of 45 different subunits.

The protein localises to the mitochondrion inner membrane. It catalyses the reaction a ubiquinone + NADH + 5 H(+)(in) = a ubiquinol + NAD(+) + 4 H(+)(out). In terms of biological role, core subunit of the mitochondrial membrane respiratory chain NADH dehydrogenase (Complex I) which catalyzes electron transfer from NADH through the respiratory chain, using ubiquinone as an electron acceptor. Part of the enzyme membrane arm which is embedded in the lipid bilayer and involved in proton translocation. This is NADH-ubiquinone oxidoreductase chain 4L (MT-ND4L) from Lemur catta (Ring-tailed lemur).